The chain runs to 577 residues: MFS-type transporter pgmG (577 aa).

Residues 1-32 are disordered; it reads MSETVTQTETDQRPATARSLGAEEKEAKSDEQ. Positions 21–31 are enriched in basic and acidic residues; sequence GAEEKEAKSDE. Helical transmembrane passes span 45–65, 84–104, 111–131, 141–161, 174–194, 218–238, 259–279, and 292–312; these read FIVI…NTIV, WLSV…SKIY, WLYL…GAAP, ALAG…LSVN, TGLT…GFAV, PLTV…LFML, LGTI…NFGG, and CFVV…YCIG. N-linked (GlcNAc...) asparagine glycosylation occurs at Asn317. Residues 330–350 traverse the membrane as a helical segment; sequence FIILFVQTASVATVFFVPIYF. A glycan (N-linked (GlcNAc...) asparagine) is linked at Asn360. 5 helical membrane-spanning segments follow: residues 363 to 383, 395 to 415, 426 to 446, 457 to 477, and 532 to 552; these read AIDA…AMIL, MPWY…MYTI, GYMI…FAVA, VATG…LAIA, and ISQV…LAIF.

It belongs to the major facilitator superfamily. TCR/Tet family.

Its subcellular location is the membrane. Its function is as follows. MFS-type transporter; part of the gene cluster that mediates the biosynthesis of pleosporalin A, ascomycone A, as well as a third cryptic naphthoquinone derived pigment, all responsible for the coloration of conidia. Seems not to be involved in pigment biosynthesis although its expression is regulated by the cluster-specific transcription factor pgmR. In Aspergillus terreus (strain NIH 2624 / FGSC A1156), this protein is MFS-type transporter pgmG.